A 968-amino-acid chain; its full sequence is RNA polymerase-associated protein RapA (968 aa).

A Helicase ATP-binding domain is found at 163–332 (EVGRRFAPRV…FARLRLLDPD (170 aa)). 176–183 (DEVGLGKT) is a binding site for ATP. The DEAH box motif lies at 278–281 (DEAH). Residues 491–645 (RVDWLIDFLK…TCPSGHILFN (155 aa)) enclose the Helicase C-terminal domain.

Belongs to the SNF2/RAD54 helicase family. RapA subfamily. Interacts with the RNAP. Has a higher affinity for the core RNAP than for the holoenzyme. Its ATPase activity is stimulated by binding to RNAP.

In terms of biological role, transcription regulator that activates transcription by stimulating RNA polymerase (RNAP) recycling in case of stress conditions such as supercoiled DNA or high salt concentrations. Probably acts by releasing the RNAP, when it is trapped or immobilized on tightly supercoiled DNA. Does not activate transcription on linear DNA. Probably not involved in DNA repair. The polypeptide is RNA polymerase-associated protein RapA (Shewanella woodyi (strain ATCC 51908 / MS32)).